The primary structure comprises 742 residues: MIEPLQPGDPGRIGPYRLVSRLGAGGMGQVFLARSPGGRPVVVKVILPEYANDDEYRIRFAREVEAARRVGGFHTAQVIDADPTADPPWMATAYIPGPSLRKAVTERGPLYGNNLRTLAAGLVEGLAAIHACGLVHRDFKPSNIVLAADGPRVIDFGVARPLDSSVMTQSGAVIGTLAYMSPEQTDGSQVGPASDVFSLGTVLAFAATGRSPFMADSIGEIIARISGPPPELPELPDDLRELVYACWEQNPDLRPTTAELLAQLSTDHTGDDWPPPHLSDLIGSMLPLGATTSPNPSLAIEPPPPSHGPPRPSEPLPDPGDDADEPSAEKPSRTLPEPEPPELEEKPIQVIHEPERPAPTPPRPREPARGAIKPKNPRPAAPQPPWSPPRVQPPRWKQLITKKPVAGILTAVATAGLVVSFLVWQWTLPETPLRPDSSTAPSESADPHELNEPRILTTDREAVAVAFSPGGSLLAGGSGDKLIHVWDVASGDELHTLEGHTDWVRAVAFSPDGALLASGSDDATVRLWDVAAAEERAVFEGHTHYVLDIAFSPDGSMVASGSRDGTARLWNVATGTEHAVLKGHTDYVYAVAFSPDGSMVASGSRDGTIRLWDVATGKERDVLQAPAENVVSLAFSPDGSMLVHGSDSTVHLWDVASGEALHTFEGHTDWVRAVAFSPDGALLASGSDDRTIRLWDVAAQEEHTTLEGHTEPVHSVAFHPEGTTLASASEDGTIRIWPIATE.

The region spanning 16–266 (YRLVSRLGAG…TAELLAQLST (251 aa)) is the Protein kinase domain. ATP contacts are provided by residues 22 to 30 (LGAGGMGQV) and Lys-44. Asp-138 (proton acceptor) is an active-site residue. The segment at 266–394 (TDHTGDDWPP…PWSPPRVQPP (129 aa)) is disordered. Positions 301 to 318 (EPPPPSHGPPRPSEPLPD) are enriched in pro residues. Positions 343 to 356 (LEEKPIQVIHEPER) are enriched in basic and acidic residues. Positions 377–392 (PRPAAPQPPWSPPRVQ) are enriched in pro residues. WD repeat units follow at residues 455–496 (ILTT…ELHT), 497–538 (LEGH…ERAV), 539–580 (FEGH…EHAV), 581–621 (LKGH…KERD), 622–663 (VLQA…ALHT), 664–705 (FEGH…EHTT), and 706–742 (LEGH…IATE).

This sequence belongs to the protein kinase superfamily. Ser/Thr protein kinase family.

It carries out the reaction L-seryl-[protein] + ATP = O-phospho-L-seryl-[protein] + ADP + H(+). The enzyme catalyses L-threonyl-[protein] + ATP = O-phospho-L-threonyl-[protein] + ADP + H(+). Its function is as follows. May play a regulatory role during the complex growth cycle and in secondary metabolite production. The protein is Probable serine/threonine-protein kinase PkwA (pkwA) of Thermomonospora curvata.